Reading from the N-terminus, the 649-residue chain is MSHIIELPEMLANQIAAGEVIERPASVVKELVENAIDAGSSQIIIEIEEAGLKKVQITDNGHGIAHDEVELALRRHATSKIKNQADLFRIRTLGFRGEALPSIASVSVLTLLTAVDGASHGTKLVARGGEVEEVIPATSPVGTKVCVEDLFFNTPARLKYMKSQQAELSHIIDIVNRLGLAHPEISFSLISDGKEMTRTAGTGQLRQAIAGIYGLVSAKKMIEIENSDLDFEISGFVSLPELTRANRNYISLFINGRYIKNFLLNRAILDGFGSKLMVGRFPLAVIHIHIDPYLADVNVHPTKQEVRISKEKELMTLVSEAIANSLKEQTLIPDALENLAKSTVRNREKVDQTILPLKENTLYYEKTEPSRPSQTEVADYQVELTDEGQDLTLFAKETLDRLTKPAKLHFAERKPANYDQLDHPELDLASIDKAYDKLEREEASSFPELEFFGQMHGTYLFAQGRDGLYIIDQHAAQERVKYEEYRESIGNVDQSQQQLLVPYIFEFPADDALRLKERMPLLEEVGVFLAEYGENQFILREHPIWMAEEEIESGIYEMCDMLLLTKEVSIKKYRAELAIMMSCKRSIKANHRIDDHSARQLLYQLSQCDNPYNCPHGRPVLVHFTKSDMEKMFRRIQENHTSLRELGKY.

Belongs to the DNA mismatch repair MutL/HexB family.

Its function is as follows. This protein is involved in the repair of mismatches in DNA. It is required for dam-dependent methyl-directed DNA mismatch repair. May act as a 'molecular matchmaker', a protein that promotes the formation of a stable complex between two or more DNA-binding proteins in an ATP-dependent manner without itself being part of a final effector complex. In Streptococcus pneumoniae (strain P1031), this protein is DNA mismatch repair protein MutL.